We begin with the raw amino-acid sequence, 374 residues long: Tryptophan--tRNA ligase (374 aa).

The 'HIGH' region signature appears at 81-89; it reads PSGPVHIGH. Positions 258–262 match the 'KMSKS' region motif; the sequence is KMSAS.

This sequence belongs to the class-I aminoacyl-tRNA synthetase family.

The protein resides in the cytoplasm. It catalyses the reaction tRNA(Trp) + L-tryptophan + ATP = L-tryptophyl-tRNA(Trp) + AMP + diphosphate + H(+). The protein is Tryptophan--tRNA ligase of Pyrobaculum arsenaticum (strain DSM 13514 / JCM 11321 / PZ6).